We begin with the raw amino-acid sequence, 443 residues long: Methionine aminopeptidase 2-1 (443 aa).

The interval methionine 1–asparagine 90 is disordered. Over residues alanine 33 to glycine 48 the composition is skewed to acidic residues. The span at lysine 58 to alanine 73 shows a compositional bias: basic residues. Residue histidine 196 participates in substrate binding. A divalent metal cation is bound by residues aspartate 216, aspartate 227, and histidine 296. Histidine 304 provides a ligand contact to substrate. 2 residues coordinate a divalent metal cation: glutamate 329 and glutamate 424.

It belongs to the peptidase M24A family. Methionine aminopeptidase eukaryotic type 2 subfamily. It depends on Co(2+) as a cofactor. Requires Zn(2+) as cofactor. Mn(2+) is required as a cofactor. The cofactor is Fe(2+).

The protein resides in the cytoplasm. The catalysed reaction is Release of N-terminal amino acids, preferentially methionine, from peptides and arylamides.. Cotranslationally removes the N-terminal methionine from nascent proteins. The N-terminal methionine is often cleaved when the second residue in the primary sequence is small and uncharged (Met-Ala-, Cys, Gly, Pro, Ser, Thr, or Val). This is Methionine aminopeptidase 2-1 from Talaromyces stipitatus (strain ATCC 10500 / CBS 375.48 / QM 6759 / NRRL 1006) (Penicillium stipitatum).